Here is a 273-residue protein sequence, read N- to C-terminus: SPRY domain-containing SOCS box protein 1 (273 aa).

The residue at position 31 (Tyr-31) is a Phosphotyrosine. One can recognise a B30.2/SPRY domain in the interval 33 to 231; the sequence is KPTRLDLLLD…IRMRYLNGLD (199 aa). The region spanning 232-273 is the SOCS box domain; sequence PEPLPLMDLCRRSVRLALGKERLGAIPALPLPASLKAYLLYQ.

Belongs to the SPSB family. Component of the probable ECS(SPSB1) E3 ubiquitin-protein ligase complex which contains CUL5, RNF7/RBX2, Elongin BC complex and SPSB1. Interacts with CUL5, RNF7, ELOB and ELOC. Directly interacts with MET tyrosine kinase domain in the presence and in the absence of HGF, however HGF treatment has a positive effect on this interaction. When phosphorylated, interacts with RASA1 without affecting its stability. Interacts (via B30.2/SPRY domain) with PAWR; this interaction is direct and occurs in association with the Elongin BC complex. Interacts with EPHB2. Interacts with NOS2.

The protein resides in the cytoplasm. It is found in the cytosol. The protein operates within protein modification; protein ubiquitination. Substrate recognition component of a SCF-like ECS (Elongin BC-CUL2/5-SOCS-box protein) E3 ubiquitin-protein ligase complex which mediates the ubiquitination and subsequent proteasomal degradation of target proteins. Negatively regulates nitric oxide (NO) production and limits cellular toxicity in activated macrophages by mediating the ubiquitination and proteasomal degradation of NOS2. Acts as a bridge which links the NOS2 with the ECS E3 ubiquitin ligase complex components ELOC and CUL5. The polypeptide is SPRY domain-containing SOCS box protein 1 (Spsb1) (Mus musculus (Mouse)).